A 217-amino-acid chain; its full sequence is Large ribosomal subunit protein uL29m (217 aa).

It belongs to the universal ribosomal protein uL29 family. As to quaternary structure, component of the mitochondrial large ribosomal subunit. Mature mitochondrial ribosomes consist of a small (37S) and a large (54S) subunit. The 37S subunit contains at least 33 different proteins and 1 molecule of RNA (15S). The 54S subunit contains at least 45 different proteins and 1 molecule of RNA (21S).

The protein resides in the mitochondrion. The polypeptide is Large ribosomal subunit protein uL29m (mrpl4) (Neosartorya fischeri (strain ATCC 1020 / DSM 3700 / CBS 544.65 / FGSC A1164 / JCM 1740 / NRRL 181 / WB 181) (Aspergillus fischerianus)).